We begin with the raw amino-acid sequence, 574 residues long: Pre-mRNA-processing protein 45 (574 aa).

5 disordered regions span residues 1-46, 203-234, 350-406, 478-503, and 549-574; these read MAAL…WKPK, PPRFKHKKIPRGPAEPPPPVLQSPPRAATAQD, ETGI…SEMR, AGSSRNDESFGGGTEEGIKEEMSKDR, and MDAARRGGKRTAEDRDEERRKRARDE. Pro residues-rich tracts occupy residues 24–33 and 215–224; these read APLPTTPGPQ and PAEPPPPVLQ. Residues 363–377 show a composition bias toward acidic residues; the sequence is GSEEESDEEEEDEEA. 3 stretches are compositionally biased toward basic and acidic residues: residues 378–397, 493–503, and 558–574; these read IRERNIVREEKRREREKEMR, EGIKEEMSKDR, and RTAEDRDEERRKRARDE.

The protein belongs to the SNW family. As to quaternary structure, associated with the spliceosome.

The protein resides in the nucleus. Its function is as follows. Involved in pre-mRNA splicing. In Cryptococcus neoformans var. neoformans serotype D (strain JEC21 / ATCC MYA-565) (Filobasidiella neoformans), this protein is Pre-mRNA-processing protein 45 (PRP45).